A 404-amino-acid chain; its full sequence is Cysteine--tRNA ligase (404 aa).

A Zn(2+)-binding site is contributed by Cys-14. The short motif at 16–26 (PTVYSDVHIGN) is the 'HIGH' region element. Residues Cys-190, His-216, and Glu-220 each coordinate Zn(2+). Residues 248-252 (KMAKS) carry the 'KMSKS' region motif. Lys-251 provides a ligand contact to ATP.

Belongs to the class-I aminoacyl-tRNA synthetase family. As to quaternary structure, monomer. The cofactor is Zn(2+).

It localises to the cytoplasm. The catalysed reaction is tRNA(Cys) + L-cysteine + ATP = L-cysteinyl-tRNA(Cys) + AMP + diphosphate. The chain is Cysteine--tRNA ligase from Mesomycoplasma hyopneumoniae (strain 232) (Mycoplasma hyopneumoniae).